The following is a 133-amino-acid chain: MSRPNSVRWLNEVQWDDQGLVPVIAQEAASGDVLMFAWMNREALQRTAETGEAIYWSRSRRRLWHKGEESGHIQKVLEIRLDCDSDVVLLKIEQIGGIACHTGRHSCFFQRYLADGSWETVDPVVKDPKDIYK.

Aspartate 82 contributes to the Mg(2+) binding site. Cysteine 83 is a binding site for Zn(2+). The Mg(2+) site is built by aspartate 84 and aspartate 86. Residues cysteine 100 and cysteine 107 each coordinate Zn(2+).

Belongs to the PRA-CH family. Homodimer. Mg(2+) serves as cofactor. Zn(2+) is required as a cofactor.

It localises to the cytoplasm. It catalyses the reaction 1-(5-phospho-beta-D-ribosyl)-5'-AMP + H2O = 1-(5-phospho-beta-D-ribosyl)-5-[(5-phospho-beta-D-ribosylamino)methylideneamino]imidazole-4-carboxamide. Its pathway is amino-acid biosynthesis; L-histidine biosynthesis; L-histidine from 5-phospho-alpha-D-ribose 1-diphosphate: step 3/9. Catalyzes the hydrolysis of the adenine ring of phosphoribosyl-AMP. This chain is Phosphoribosyl-AMP cyclohydrolase, found in Aromatoleum aromaticum (strain DSM 19018 / LMG 30748 / EbN1) (Azoarcus sp. (strain EbN1)).